Reading from the N-terminus, the 307-residue chain is tRNA N(3)-methylcytidine methyltransferase trm140 (307 aa).

S-adenosyl-L-methionine-binding residues include Trp83, Tyr87, Gly125, Asp150, Asp176, Leu177, and Ile197.

It belongs to the methyltransferase superfamily. METL family.

The catalysed reaction is cytidine(32) in tRNA(Thr) + S-adenosyl-L-methionine = N(3)-methylcytidine(32) in tRNA(Thr) + S-adenosyl-L-homocysteine + H(+). Its function is as follows. S-adenosyl-L-methionine-dependent methyltransferase that mediates N(3)-methylcytidine modification of residue 32 of the tRNA anticodon loop of tRNA(Thr). Does not catalyze N(3)-methylcytidine modification of tRNA(Ser). The polypeptide is tRNA N(3)-methylcytidine methyltransferase trm140 (Schizosaccharomyces pombe (strain 972 / ATCC 24843) (Fission yeast)).